Here is a 247-residue protein sequence, read N- to C-terminus: uncharacterized protein (247 aa).

The stretch at 200–225 forms a coiled coil; that stretch reads SGKYSELKTKVNDIENDLRTLSSNTN.

This is an uncharacterized protein from Acanthamoeba polyphaga (Amoeba).